Here is a 264-residue protein sequence, read N- to C-terminus: Small ribosomal subunit protein uS2 (264 aa).

Residues 228–264 are disordered; it reads HEDVSAGPVEEQSDEAQAAEQGTEGDTAQLTSSQGRS. Over residues 251 to 264 the composition is skewed to polar residues; that stretch reads EGDTAQLTSSQGRS.

It belongs to the universal ribosomal protein uS2 family.

This chain is Small ribosomal subunit protein uS2, found in Deinococcus radiodurans (strain ATCC 13939 / DSM 20539 / JCM 16871 / CCUG 27074 / LMG 4051 / NBRC 15346 / NCIMB 9279 / VKM B-1422 / R1).